A 312-amino-acid chain; its full sequence is Cytochrome c biogenesis protein CcsA (312 aa).

The next 8 membrane-spanning stretches (helical) occupy residues 12–32, 47–67, 72–92, 98–118, 144–164, 220–240, 254–271, and 281–301; these read NLVFGILLFAMTIYWISLSFF, IVANILLFFILGSRWIVAGYF, LYESLLFLTWTLLTIYLYVEF, LVGAILIPVALLINGFANLTL, MMLSYGTLIMGSLLCILFLVI, IIGLGFPFLTIGIIAGGVWAN, TWALITWIVFATYLHSRI, and AILGGLGFFVIWICYLGVNFL.

It belongs to the CcmF/CycK/Ccl1/NrfE/CcsA family. As to quaternary structure, may interact with Ccs1.

Its subcellular location is the plastid. It localises to the chloroplast thylakoid membrane. Required during biogenesis of c-type cytochromes (cytochrome c6 and cytochrome f) at the step of heme attachment. The sequence is that of Cytochrome c biogenesis protein CcsA from Trieres chinensis (Marine centric diatom).